Here is a 338-residue protein sequence, read N- to C-terminus: Ferrochelatase (338 aa).

Fe cation contacts are provided by His-189 and Glu-294.

The protein belongs to the ferrochelatase family.

The protein localises to the cytoplasm. The enzyme catalyses heme b + 2 H(+) = protoporphyrin IX + Fe(2+). Its pathway is porphyrin-containing compound metabolism; protoheme biosynthesis; protoheme from protoporphyrin-IX: step 1/1. Catalyzes the ferrous insertion into protoporphyrin IX. The chain is Ferrochelatase from Pseudomonas putida (strain ATCC 47054 / DSM 6125 / CFBP 8728 / NCIMB 11950 / KT2440).